The chain runs to 1498 residues: Mitogen-activated protein kinase kinase kinase nsy-1 (1498 aa).

Disordered regions lie at residues 1 to 35 (MSQNNKRQVQHNHEMSNDVCPLPLPPRGAPPPTAY) and 190 to 209 (LQSYDKNNNDDDSKPPFART). Over residues 22–33 (LPLPPRGAPPPT) the composition is skewed to pro residues. One can recognise a Protein kinase domain in the interval 664-925 (SNERVVLGKG…AKDLLQDPFI (262 aa)). ATP is bound by residues 670-678 (LGKGTYGTV) and Lys-693. The active-site Proton acceptor is the Asp-790. Positions 1022–1050 (IDHARNRTFSSSSPVPDGQSSAGTNMSHP) are disordered. The segment covering 1031–1042 (SSSSPVPDGQSS) has biased composition (low complexity). Residues 1276–1314 (SREERVREDRKELRTLQEENEILIERLLQVERELNAQLK) are a coiled coil. Residues 1461–1498 (QPVFLSPMRSRDDSLDDYHSSSADDMYTGAAAETSSGN) are disordered. Residues 1469 to 1479 (RSRDDSLDDYH) are compositionally biased toward basic and acidic residues.

Belongs to the protein kinase superfamily. STE Ser/Thr protein kinase family. MAP kinase kinase kinase subfamily. Interacts with unc-43. Interacts with sek-1. Mg(2+) is required as a cofactor. Post-translationally, may be phosphorylated upon pathogenic bacterial infection. May be regulated by proteasomal degradation mediated by the E3-ubiquitin ligase rle-1. As to expression, expressed in intestine, hypodermis, rectal gland cell and neurons including sensory AWC neurons.

The protein localises to the cell projection. It is found in the axon. The protein resides in the perikaryon. It carries out the reaction L-seryl-[protein] + ATP = O-phospho-L-seryl-[protein] + ADP + H(+). It catalyses the reaction L-threonyl-[protein] + ATP = O-phospho-L-threonyl-[protein] + ADP + H(+). Its function is as follows. Serine/threonine-protein kinase which, by phosphorylating and activating sek-1, plays an important role in the activation of the p38 pathway also composed of the downstream effectors sek-1 and pmk-1. Downstream of CaMKII unc-43 and adapter protein tir-1, plays a role in determining asymmetric cell fates in olfactory AWC neurons during neuronal development. Activation results in the repression of odorant receptor str-2 expression in one of the 2 AWC neurons. Involved in resistance to pathogenic Gram-positive and Gram-negative bacterial and fungal infection. Involved in resistance to the nematotoxic C.cinerea galectin Cgl2. Probably by activating the sek1/pmk-1/skn-1 pathway, involved in the up-regulation of gcs-1 and glutathione-S-transferase gst-4 expression upon bacterial infection. Probably downstream of tir-1 and nipi-3, required for the expression of antimicrobial peptide nlp-29 in the epidermis in response to fungal infection or physical injury. Plays a role in resistance to several environmental stresses including oxidative, protein misfolding (ER) and osmotic stresses, and DNA-damaging reagents. Plays a role in the stabilization of transcription factor rnt-1 in the intestine during oxidative stress. Involved in germline apoptosis induced by heavy metals, such as Cu(2+). In addition, plays a role in the up-regulation of gcs-1 upon arsenite treatment, most likely through activation of pmk-1, to confer protection against toxicity induced by heavy metals. Plays a role downstream of tir-1 in regulating susceptibility to anoxia. Involved in egg laying. This chain is Mitogen-activated protein kinase kinase kinase nsy-1, found in Caenorhabditis elegans.